The primary structure comprises 127 residues: Biogenesis of lysosome-related organelles complex 1 subunit 2 (127 aa).

It belongs to the BLOC1S2 family. As to quaternary structure, component of the biogenesis of lysosome-related organelles complex-1 (BLOC-1). Interacts with BLOS1 and SNX1.

The protein localises to the cytoplasm. It localises to the endosome. Functionally, component of the biogenesis of lysosome-related organelles complex-1 (BLOC-1), a complex that mediates the vacuolar degradative transport via the intracellular vesicle trafficking from the endosome to the vacuole. The polypeptide is Biogenesis of lysosome-related organelles complex 1 subunit 2 (BLOS2) (Arabidopsis thaliana (Mouse-ear cress)).